The primary structure comprises 190 residues: Adenylate kinase (190 aa).

10–15 contributes to the ATP binding site; sequence AAGKGT. The segment at 30–59 is NMP; the sequence is STGDMLRAAIASGSELGQRVSGIMERGELV. Residues threonine 31, arginine 36, 57-59, 85-88, and glutamine 92 contribute to the AMP site; these read ELV and GFPR. Residues 126 to 136 are LID; sequence GRFAESGRADD. Arginine 127 is an ATP binding site. 2 residues coordinate AMP: arginine 133 and arginine 144. Glycine 172 provides a ligand contact to ATP.

Belongs to the adenylate kinase family. In terms of assembly, monomer.

It localises to the cytoplasm. It catalyses the reaction AMP + ATP = 2 ADP. The protein operates within purine metabolism; AMP biosynthesis via salvage pathway; AMP from ADP: step 1/1. Catalyzes the reversible transfer of the terminal phosphate group between ATP and AMP. Plays an important role in cellular energy homeostasis and in adenine nucleotide metabolism. The sequence is that of Adenylate kinase from Phenylobacterium zucineum (strain HLK1).